The sequence spans 495 residues: Glycerol kinase (495 aa).

Threonine 11 serves as a coordination point for ADP. ATP contacts are provided by threonine 11, threonine 12, and serine 13. Residue threonine 11 coordinates sn-glycerol 3-phosphate. An ADP-binding site is contributed by arginine 15. Sn-glycerol 3-phosphate contacts are provided by arginine 81, glutamate 82, tyrosine 133, and aspartate 242. The glycerol site is built by arginine 81, glutamate 82, tyrosine 133, aspartate 242, and glutamine 243. The ADP site is built by threonine 264 and glycine 307. ATP is bound by residues threonine 264, glycine 307, glutamine 311, and glycine 408. Residues glycine 408 and asparagine 412 each coordinate ADP.

It belongs to the FGGY kinase family.

It catalyses the reaction glycerol + ATP = sn-glycerol 3-phosphate + ADP + H(+). It functions in the pathway polyol metabolism; glycerol degradation via glycerol kinase pathway; sn-glycerol 3-phosphate from glycerol: step 1/1. Its activity is regulated as follows. Inhibited by fructose 1,6-bisphosphate (FBP). Key enzyme in the regulation of glycerol uptake and metabolism. Catalyzes the phosphorylation of glycerol to yield sn-glycerol 3-phosphate. The polypeptide is Glycerol kinase (Acinetobacter baylyi (strain ATCC 33305 / BD413 / ADP1)).